The primary structure comprises 303 residues: Paired immunoglobulin-like type 2 receptor alpha (303 aa).

Positions 1-19 (MGRPLLLPLLPLLLPPAFL) are cleaved as a signal peptide. The Extracellular portion of the chain corresponds to 20–197 (QPSGSTGSGP…DSWHISLETA (178 aa)). Residues 32 to 150 (LYGVTQPKHL…SIEGTKLSIT (119 aa)) enclose the Ig-like V-type domain. The N-linked (GlcNAc...) asparagine glycan is linked to N100. A helical membrane pass occupies residues 198 to 218 (VGVAVAVTVLGIMILGLICLL). The Cytoplasmic portion of the chain corresponds to 219-303 (RWRRRKGQQR…NETLYSVLKA (85 aa)). A disordered region spans residues 226–296 (QQRTKATTPA…RPLKSPQNET (71 aa)). Short sequence motifs (ITIM motif) lie at residues 267–272 (IVYASL) and 296–301 (TLYSVL).

Monomer. Interacts with PTPN6/SHP-1 and PTPN11/SHP-2 upon tyrosine phosphorylation. In terms of assembly, (Microbial infection) Interacts with herpes simplex virus 1 glycoprotein B. In terms of processing, according to PubMed:10660620, N- and O-glycosylated. According to PubMed:10903717, only N-glycosylated. Phosphorylated on tyrosine residues. As to expression, predominantly detected in hemopoietic tissues and is expressed by monocytes, macrophages, and granulocytes, but not by lymphocytes. Also strongly expressed by dendritic cells (DC); preferentially by CD14+/CD1a- DC derived from CD34+ progenitors. Also expressed by CD11c+ blood and tonsil DC, but not by CD11c- DC precursors.

The protein localises to the cell membrane. It is found in the secreted. Functionally, paired receptors consist of highly related activating and inhibitory receptors and are widely involved in the regulation of the immune system. PILRA is thought to act as a cellular signaling inhibitory receptor by recruiting cytoplasmic phosphatases like PTPN6/SHP-1 and PTPN11/SHP-2 via their SH2 domains that block signal transduction through dephosphorylation of signaling molecules. Receptor for PIANP. Its function is as follows. (Microbial infection) Acts as an entry co-receptor for herpes simplex virus 1. The protein is Paired immunoglobulin-like type 2 receptor alpha (PILRA) of Homo sapiens (Human).